Consider the following 75-residue polypeptide: Small ribosomal subunit protein bS18 (75 aa).

The protein belongs to the bacterial ribosomal protein bS18 family. In terms of assembly, part of the 30S ribosomal subunit. Forms a tight heterodimer with protein bS6.

In terms of biological role, binds as a heterodimer with protein bS6 to the central domain of the 16S rRNA, where it helps stabilize the platform of the 30S subunit. The sequence is that of Small ribosomal subunit protein bS18 from Cellvibrio japonicus (strain Ueda107) (Pseudomonas fluorescens subsp. cellulosa).